The sequence spans 358 residues: 4-diphosphocytidyl-2-C-methyl-D-erythritol kinase (358 aa).

K24 is a catalytic residue. 138-148 (PVAGGMAGGSA) provides a ligand contact to ATP. D186 is an active-site residue.

It belongs to the GHMP kinase family. IspE subfamily.

The enzyme catalyses 4-CDP-2-C-methyl-D-erythritol + ATP = 4-CDP-2-C-methyl-D-erythritol 2-phosphate + ADP + H(+). The protein operates within isoprenoid biosynthesis; isopentenyl diphosphate biosynthesis via DXP pathway; isopentenyl diphosphate from 1-deoxy-D-xylulose 5-phosphate: step 3/6. Functionally, catalyzes the phosphorylation of the position 2 hydroxy group of 4-diphosphocytidyl-2C-methyl-D-erythritol. The chain is 4-diphosphocytidyl-2-C-methyl-D-erythritol kinase from Corynebacterium jeikeium (strain K411).